A 306-amino-acid chain; its full sequence is Serine/threonine-protein kinase mug51 (306 aa).

Belongs to the STK19 family.

It carries out the reaction L-seryl-[protein] + ATP = O-phospho-L-seryl-[protein] + ADP + H(+). It catalyses the reaction L-threonyl-[protein] + ATP = O-phospho-L-threonyl-[protein] + ADP + H(+). Its function is as follows. Serine/threonine-protein kinase. Has a role in meiosis. This Schizosaccharomyces pombe (strain 972 / ATCC 24843) (Fission yeast) protein is Serine/threonine-protein kinase mug51 (mug51).